A 212-amino-acid chain; its full sequence is Dephospho-CoA kinase (212 aa).

Positions 4-204 (IVALTGGICS…RDYLKAEKTT (201 aa)) constitute a DPCK domain. Residue 12 to 17 (CSGKSV) participates in ATP binding.

The protein belongs to the CoaE family.

Its subcellular location is the cytoplasm. The catalysed reaction is 3'-dephospho-CoA + ATP = ADP + CoA + H(+). It functions in the pathway cofactor biosynthesis; coenzyme A biosynthesis; CoA from (R)-pantothenate: step 5/5. Its function is as follows. Catalyzes the phosphorylation of the 3'-hydroxyl group of dephosphocoenzyme A to form coenzyme A. The chain is Dephospho-CoA kinase from Blochmanniella pennsylvanica (strain BPEN).